We begin with the raw amino-acid sequence, 434 residues long: AT-rich interactive domain-containing protein 5 (434 aa).

The interval 1-120 is disordered; that stretch reads MMADTEMQEQ…SSPHVPEESV (120 aa). 3 stretches are compositionally biased toward basic and acidic residues: residues 25–37, 43–54, and 78–90; these read ELEKDLNSIERPK, DTTHTLDSDVHL, and RNGDVDQSEKKIT. The span at 92-102 shows a compositional bias: polar residues; sequence DGGQEETTLGE. The region spanning 142 to 233 is the ARID domain; sequence PQDQEAFIKE…ALLEYEKHLR (92 aa). Residues 237–274 are disordered; the sequence is ELNLPGSASLPSSGIEKEASSHQASGSGRTRRDAAARA. One can recognise a sHSP domain in the interval 336 to 434; that stretch reads AEVIDVGPPA…RLFVRVPFEQ (99 aa).

The protein belongs to the small heat shock protein (HSP20) family.

It is found in the nucleus. In Arabidopsis thaliana (Mouse-ear cress), this protein is AT-rich interactive domain-containing protein 5 (ARID5).